Reading from the N-terminus, the 90-residue chain is Acylphosphatase (90 aa).

The 88-residue stretch at 3 to 90 (QYHMIADGRV…KGYRTFSISY (88 aa)) folds into the Acylphosphatase-like domain. Residues Arg-18 and Asn-36 contribute to the active site.

Belongs to the acylphosphatase family.

The enzyme catalyses an acyl phosphate + H2O = a carboxylate + phosphate + H(+). The protein is Acylphosphatase (acyP) of Bacillus velezensis (strain DSM 23117 / BGSC 10A6 / LMG 26770 / FZB42) (Bacillus amyloliquefaciens subsp. plantarum).